Reading from the N-terminus, the 259-residue chain is NAD kinase (259 aa).

D49 functions as the Proton acceptor in the catalytic mechanism. Residues 49-50 (DG), R54, 118-119 (NE), D148, A156, 159-164 (TAYNYS), and A183 contribute to the NAD(+) site.

The protein belongs to the NAD kinase family. The cofactor is a divalent metal cation.

The protein resides in the cytoplasm. The catalysed reaction is NAD(+) + ATP = ADP + NADP(+) + H(+). Involved in the regulation of the intracellular balance of NAD and NADP, and is a key enzyme in the biosynthesis of NADP. Catalyzes specifically the phosphorylation on 2'-hydroxyl of the adenosine moiety of NAD to yield NADP. This chain is NAD kinase, found in Xylella fastidiosa (strain 9a5c).